The chain runs to 1032 residues: Protein phosphatase 1 regulatory subunit 12A (1032 aa).

Residues K35–F38 carry the KVKF motif motif. ANK repeat units lie at residues D39–Y68, D72–Q101, E105–A134, E138–V164, S198–I227, and D231–T260. N67 and N100 each carry (3S)-3-hydroxyasparagine; by HIF1AN. N226 carries the (3S)-3-hydroxyasparagine; by HIF1AN modification. 2 disordered regions span residues L290–C553 and S588–K928. Residues H291–P300 show a composition bias toward basic and acidic residues. S299 is subject to Phosphoserine. The segment covering I302–T316 has biased composition (polar residues). Over residues K318–E340 the composition is skewed to basic and acidic residues. Over residues S357–A369 the composition is skewed to acidic residues. The span at A383–T399 shows a compositional bias: low complexity. A compositionally biased stretch (polar residues) spans L400–I421. Residues S422 and S432 each carry the phosphoserine modification. Basic and acidic residues predominate over residues S422 to S432. Phosphothreonine is present on T443. S445 is modified (phosphoserine). The residue at position 446 (Y446) is a Phosphotyrosine. The segment covering R469–L480 has biased composition (low complexity). S472 bears the Phosphoserine; by NUAK1 mark. S473 carries the post-translational modification Phosphoserine; by CDK1. Position 477 is a phosphoserine (S477). Basic and acidic residues predominate over residues D481–G491. Phosphoserine is present on residues S507 and S509. The segment covering N540–R551 has biased composition (polar residues). S601 is subject to Phosphoserine. Polar residues predominate over residues P602 to R612. A compositionally biased stretch (basic and acidic residues) spans W614–S625. Position 618 is a phosphoserine (S618). Positions L633–S661 are enriched in low complexity. Over residues V674–R683 the composition is skewed to basic and acidic residues. An interaction with ROCK2 region spans residues R683–E866. Positions K684–R694 are enriched in basic residues. 2 positions are modified to phosphoserine; by PKA and PKG; in vitro: S693 and S696. Position 697 is a phosphothreonine; by ROCK1, ROCK2, CDC42BP, ZIPK/DAPK3 and RAF1 (T697). The segment covering R719–A768 has biased composition (basic and acidic residues). Positions S774 to S797 are enriched in low complexity. A compositionally biased stretch (polar residues) spans Q798 to Y812. S804 carries the post-translational modification Phosphoserine. Positions L816 to I842 are enriched in basic and acidic residues. Residues R843 to S854 are compositionally biased toward basic residues. S854 carries the phosphoserine; by ROCK2 modification. A phosphoserine mark is found at S864 and S873. Residues Q869 to Q885 are compositionally biased toward basic and acidic residues. A compositionally biased stretch (low complexity) spans T886–S900. Residues S905 and S910 each carry the phosphoserine modification. Phosphoserine; by NUAK1 is present on S912. The segment covering L916–K928 has biased composition (basic and acidic residues). S997 bears the Phosphoserine mark.

PP1 comprises a catalytic subunit, PPP1CA, PPP1CB or PPP1CC, and one or several targeting or regulatory subunits. PPP1R12A mediates binding to myosin. Interacts with ARHA and CIT. Binds PPP1R12B, ROCK1 and IL16. Interacts directly with PRKG1. Non-covalent dimer of 2 dimers; PRKG1-PRKG1 and PPP1R12A-PPP1R12A. Interacts with SMTNL1. Interacts with PPP1CB; the interaction is direct. Interacts (when phosphorylated at Ser-445, Ser-472 and Ser-910) with 14-3-3. Interacts with ROCK1 and ROCK2. Interacts with isoform 1 and isoform 2 of ZIPK/DAPK3. Interacts with RAF1. Interacts with HIF1AN. Interacts with NCKAP1L. Phosphorylated on upon DNA damage, probably by ATM or ATR. Phosphorylated by CIT (Rho-associated kinase). Phosphorylated cooperatively by ROCK1 and CDC42BP on Thr-697. In vitro, phosphorylation of Ser-696 by PKA and PKG appears to prevent phosphorylation of the inhibitory site Thr-697, probably mediated by PRKG1. May be phosphorylated at Thr-697 by DMPK; may inhibit the myosin phosphatase activity. Phosphorylated at Ser-473 by CDK1 during mitosis, creating docking sites for the POLO box domains of PLK1. Subsequently, PLK1 binds and phosphorylates PPP1R12A. In terms of tissue distribution, smooth muscle. Detected in aorta, portal vein, stomach, intestine, bladder and lung.

The protein localises to the cytoplasm. Its subcellular location is the cytoskeleton. It localises to the stress fiber. In terms of biological role, key regulator of protein phosphatase 1C (PPP1C). Mediates binding to myosin. As part of the PPP1C complex, involved in dephosphorylation of PLK1. Capable of inhibiting HIF1AN-dependent suppression of HIF1A activity. The sequence is that of Protein phosphatase 1 regulatory subunit 12A from Rattus norvegicus (Rat).